We begin with the raw amino-acid sequence, 360 residues long: 3-dehydroquinate synthase (360 aa).

NAD(+) contacts are provided by residues 106-110 (GVIGD), 130-131 (TS), Lys143, and Lys152. Positions 185, 246, and 262 each coordinate Zn(2+).

This sequence belongs to the sugar phosphate cyclases superfamily. Dehydroquinate synthase family. It depends on Co(2+) as a cofactor. Zn(2+) serves as cofactor. NAD(+) is required as a cofactor.

The protein localises to the cytoplasm. It catalyses the reaction 7-phospho-2-dehydro-3-deoxy-D-arabino-heptonate = 3-dehydroquinate + phosphate. It participates in metabolic intermediate biosynthesis; chorismate biosynthesis; chorismate from D-erythrose 4-phosphate and phosphoenolpyruvate: step 2/7. Catalyzes the conversion of 3-deoxy-D-arabino-heptulosonate 7-phosphate (DAHP) to dehydroquinate (DHQ). The sequence is that of 3-dehydroquinate synthase from Leuconostoc citreum (strain KM20).